Consider the following 34-residue polypeptide: MSDIN-like toxin proprotein 12 (34 aa).

A propeptide spanning residues M1 to P10 is cleaved from the precursor. Residues H11–P19 constitute a cross-link (cyclopeptide (His-Pro)). Positions C20 to G34 are excised as a propeptide.

Belongs to the MSDIN fungal toxin family. In terms of processing, processed by the macrocyclase-peptidase enzyme POPB to yield a toxic cyclic nonapeptide. POPB first removes 10 residues from the N-terminus. Conformational trapping of the remaining peptide forces the enzyme to release this intermediate rather than proceed to macrocyclization. The enzyme rebinds the remaining peptide in a different conformation and catalyzes macrocyclization of the N-terminal 9 residues.

Functionally, probable toxin that belongs to the MSDIN-like toxin family responsible for a large number of food poisoning cases and deaths. The polypeptide is MSDIN-like toxin proprotein 12 (Amanita bisporigera (Destroying angel)).